The primary structure comprises 422 residues: Probable alpha-1,6-mannosyltransferase MNN11 (422 aa).

Residues 1–31 (MAIKPRTKGKTYSSRSVGSQWFNRLGFKQNK) are Cytoplasmic-facing. A helical; Signal-anchor for type II membrane protein transmembrane segment spans residues 32-52 (YGTCKFLSIITAFVFILYFFS). The Lumenal segment spans residues 53–422 (NRFYPISRSA…GHMYQKIKKS (370 aa)).

It belongs to the glycosyltransferase 34 family. Component of the M-Pol II complex composed of ANP1, MNN9, MNN10, MNN11 and HOC1.

The protein localises to the golgi apparatus. It localises to the cis-Golgi network membrane. Required for synthesis of full-length mannan chains. Functionally, the M-Pol II complex possesses alpha-1,6-mannosyltransferase activity and is probably involved in the elongation of the mannan backbone of N-linked glycans on cell wall and periplasmic proteins. This Saccharomyces cerevisiae (strain ATCC 204508 / S288c) (Baker's yeast) protein is Probable alpha-1,6-mannosyltransferase MNN11 (MNN11).